The following is a 328-amino-acid chain: tRNA dimethylallyltransferase (328 aa).

An ATP-binding site is contributed by 25–32; the sequence is GPTAVGKT. A substrate-binding site is contributed by 27 to 32; that stretch reads TAVGKT. Residues 50-53 are interaction with substrate tRNA; that stretch reads DSMQ.

The protein belongs to the IPP transferase family. As to quaternary structure, monomer. Mg(2+) serves as cofactor.

It carries out the reaction adenosine(37) in tRNA + dimethylallyl diphosphate = N(6)-dimethylallyladenosine(37) in tRNA + diphosphate. Its function is as follows. Catalyzes the transfer of a dimethylallyl group onto the adenine at position 37 in tRNAs that read codons beginning with uridine, leading to the formation of N6-(dimethylallyl)adenosine (i(6)A). The sequence is that of tRNA dimethylallyltransferase from Halothermothrix orenii (strain H 168 / OCM 544 / DSM 9562).